Here is a 529-residue protein sequence, read N- to C-terminus: Alkaline phosphatase, germ cell type (529 aa).

The N-terminal stretch at 1-18 (MWGACLLLLGLSLQVCPS) is a signal peptide. Asp60 contacts Mg(2+). Residues Asp60 and Ser110 each contribute to the Zn(2+) site. The active-site Phosphoserine intermediate is Ser110. Cys139 and Cys201 are oxidised to a cystine. Residue Asn140 is glycosylated (N-linked (GlcNAc...) asparagine). Ser173 serves as a coordination point for Mg(2+). A Ca(2+)-binding site is contributed by Glu234. N-linked (GlcNAc...) asparagine glycosylation is found at Asn267 and Asn277. Positions 287, 288, and 303 each coordinate Ca(2+). Mg(2+) is bound at residue Glu329. Zn(2+)-binding residues include Asp334, His338, Asp375, His376, and His450. Cys485 and Cys492 are disulfide-bonded. Ser502 carries GPI-anchor amidated serine lipidation. Residues 503–529 (AVSPGYMSTLLCLLAGKMLMLMAAAEP) constitute a propeptide, removed in mature form.

The protein belongs to the alkaline phosphatase family. As to quaternary structure, homodimer. Requires Mg(2+) as cofactor. The cofactor is Zn(2+). Ca(2+) is required as a cofactor. In terms of tissue distribution, embryo and testis.

Its subcellular location is the cell membrane. It carries out the reaction a phosphate monoester + H2O = an alcohol + phosphate. Its activity is regulated as follows. Inhibited by L-leucine, EDTA and heat. In terms of biological role, alkaline phosphatase that can hydrolyze various phosphate compounds. In Mus musculus (Mouse), this protein is Alkaline phosphatase, germ cell type (Alpg).